We begin with the raw amino-acid sequence, 28 residues long: Basic phospholipase A2 homolog BmatTX-II (28 aa).

As to quaternary structure, monomer. In terms of tissue distribution, expressed by the venom gland.

It localises to the secreted. In terms of biological role, snake venom phospholipase A2 homolog that lacks enzymatic activity. Shows high myotoxic activity, neutrophil activation (demonstrated by activation induction of IL-1beta production), and slight cytotoxicity against Jurkat (leukemia T) and SK-BR-3 (breast adenocarcinoma) tumor cell lines. A model of myotoxic mechanism has been proposed: an apo Lys49-PLA2 is activated by the entrance of a hydrophobic molecule (e.g. fatty acid) at the hydrophobic channel of the protein leading to a reorientation of a monomer. This reorientation causes a transition between 'inactive' to 'active' states, causing alignment of C-terminal and membrane-docking sites (MDoS) side-by-side and putting the membrane-disruption sites (MDiS) in the same plane, exposed to solvent and in a symmetric position for both monomers. The MDoS region stabilizes the toxin on membrane by the interaction of charged residues with phospholipid head groups. Subsequently, the MDiS region destabilizes the membrane with penetration of hydrophobic residues. This insertion causes a disorganization of the membrane, allowing an uncontrolled influx of ions (i.e. calcium and sodium), and eventually triggering irreversible intracellular alterations and cell death. The polypeptide is Basic phospholipase A2 homolog BmatTX-II (Bothrops mattogrossensis (Pitviper)).